We begin with the raw amino-acid sequence, 491 residues long: Glycogen synthase 1 (491 aa).

Residue Lys-15 participates in ADP-alpha-D-glucose binding.

The protein belongs to the glycosyltransferase 1 family. Bacterial/plant glycogen synthase subfamily.

It carries out the reaction [(1-&gt;4)-alpha-D-glucosyl](n) + ADP-alpha-D-glucose = [(1-&gt;4)-alpha-D-glucosyl](n+1) + ADP + H(+). It participates in glycan biosynthesis; glycogen biosynthesis. In terms of biological role, synthesizes alpha-1,4-glucan chains using ADP-glucose. This chain is Glycogen synthase 1, found in Synechococcus sp. (strain JA-3-3Ab) (Cyanobacteria bacterium Yellowstone A-Prime).